Reading from the N-terminus, the 427-residue chain is 5'-deoxyadenosine deaminase (427 aa).

Zn(2+)-binding residues include H62 and H64. Residues E91 and H183 each contribute to the substrate site. Zn(2+) is bound at residue H210. The substrate site is built by E213 and D298. Zn(2+) is bound at residue D298.

This sequence belongs to the metallo-dependent hydrolases superfamily. MTA/SAH deaminase family. As to quaternary structure, homotetramer. It depends on Zn(2+) as a cofactor.

The catalysed reaction is 5'-deoxyadenosine + H2O + H(+) = 5'-deoxyinosine + NH4(+). It catalyses the reaction S-adenosyl-L-homocysteine + H2O + H(+) = S-inosyl-L-homocysteine + NH4(+). It carries out the reaction S-methyl-5'-thioadenosine + H2O + H(+) = S-methyl-5'-thioinosine + NH4(+). The enzyme catalyses adenosine + H2O + H(+) = inosine + NH4(+). It participates in amino-acid biosynthesis; S-adenosyl-L-methionine biosynthesis. Functionally, catalyzes the deamination of three SAM-derived enzymatic products, namely 5'-deoxyadenosine, S-adenosyl-L-homocysteine, and 5'-methylthioadenosine, to produce the inosine analogs. Can also deaminate adenosine. The preferred substrate for this enzyme is 5'-deoxyadenosine, but all these substrates are efficiently deaminated. Likely functions in a S-adenosyl-L-methionine (SAM) recycling pathway from S-adenosyl-L-homocysteine (SAH) produced from SAM-dependent methylation reactions. May also be involved in the recycling of 5'-deoxyadenosine, whereupon the 5'-deoxyribose moiety of 5'-deoxyinosine is further metabolized to deoxyhexoses used for the biosynthesis of aromatic amino acids in methanogens. The polypeptide is 5'-deoxyadenosine deaminase (Methanothermobacter thermautotrophicus (strain ATCC 29096 / DSM 1053 / JCM 10044 / NBRC 100330 / Delta H) (Methanobacterium thermoautotrophicum)).